The sequence spans 334 residues: Protein-methionine-sulfoxide reductase catalytic subunit MsrP (334 aa).

Residues 1-44 (MKKIRPLTEADVTAESAFFMQRRQVLKALGISAAALSLPSTAQA) constitute a signal peptide (tat-type signal). Mo-molybdopterin contacts are provided by residues N88, 91–92 (YE), C146, T181, N233, R238, and 249–251 (GIK).

The protein belongs to the MsrP family. As to quaternary structure, heterodimer of a catalytic subunit (MsrP) and a heme-binding subunit (MsrQ). Mo-molybdopterin is required as a cofactor. Predicted to be exported by the Tat system. The position of the signal peptide cleavage has not been experimentally proven.

It localises to the periplasm. The catalysed reaction is L-methionyl-[protein] + a quinone + H2O = L-methionyl-(S)-S-oxide-[protein] + a quinol. It carries out the reaction L-methionyl-[protein] + a quinone + H2O = L-methionyl-(R)-S-oxide-[protein] + a quinol. Part of the MsrPQ system that repairs oxidized periplasmic proteins containing methionine sulfoxide residues (Met-O), using respiratory chain electrons. Thus protects these proteins from oxidative-stress damage caused by reactive species of oxygen and chlorine generated by the host defense mechanisms. MsrPQ is essential for the maintenance of envelope integrity under bleach stress, rescuing a wide series of structurally unrelated periplasmic proteins from methionine oxidation, including the primary periplasmic chaperone SurA and the lipoprotein Pal. The catalytic subunit MsrP is non-stereospecific, being able to reduce both (R-) and (S-) diastereoisomers of methionine sulfoxide. This chain is Protein-methionine-sulfoxide reductase catalytic subunit MsrP, found in Salmonella newport (strain SL254).